The chain runs to 457 residues: Exodeoxyribonuclease 7 large subunit (457 aa).

Belongs to the XseA family. As to quaternary structure, heterooligomer composed of large and small subunits.

Its subcellular location is the cytoplasm. The catalysed reaction is Exonucleolytic cleavage in either 5'- to 3'- or 3'- to 5'-direction to yield nucleoside 5'-phosphates.. In terms of biological role, bidirectionally degrades single-stranded DNA into large acid-insoluble oligonucleotides, which are then degraded further into small acid-soluble oligonucleotides. In Citrobacter koseri (strain ATCC BAA-895 / CDC 4225-83 / SGSC4696), this protein is Exodeoxyribonuclease 7 large subunit.